The sequence spans 179 residues: MSVVIASRRYANALLSVVEESNTIDKTLDEMNAISEVLHHSRDLVHALKSPLISYDKKIHIVEEVFKGRVSETVMFFLKLVGKKNRLGHLPHIVDEFKNLLDEDRGIINVDITSAVELSDEQANELVATIANMSGKQVRATLTVNEELIAGAAVKIADTIIDGTVRHQLSKLRSSLVAA.

This sequence belongs to the ATPase delta chain family. As to quaternary structure, F-type ATPases have 2 components, F(1) - the catalytic core - and F(0) - the membrane proton channel. F(1) has five subunits: alpha(3), beta(3), gamma(1), delta(1), epsilon(1). F(0) has three main subunits: a(1), b(2) and c(10-14). The alpha and beta chains form an alternating ring which encloses part of the gamma chain. F(1) is attached to F(0) by a central stalk formed by the gamma and epsilon chains, while a peripheral stalk is formed by the delta and b chains.

It is found in the cell inner membrane. In terms of biological role, f(1)F(0) ATP synthase produces ATP from ADP in the presence of a proton or sodium gradient. F-type ATPases consist of two structural domains, F(1) containing the extramembraneous catalytic core and F(0) containing the membrane proton channel, linked together by a central stalk and a peripheral stalk. During catalysis, ATP synthesis in the catalytic domain of F(1) is coupled via a rotary mechanism of the central stalk subunits to proton translocation. Its function is as follows. This protein is part of the stalk that links CF(0) to CF(1). It either transmits conformational changes from CF(0) to CF(1) or is implicated in proton conduction. In Chlorobium chlorochromatii (strain CaD3), this protein is ATP synthase subunit delta.